The primary structure comprises 76 residues: MNKALFLCLVVLCAAVVFAAEDLQKAKHAPFKRAAPCFCSGKPGRGDLWILRGDCPGGYGYTSNCYKWPNICCYPH.

An N-terminal signal peptide occupies residues 1-19 (MNKALFLCLVVLCAAVVFA). The propeptide occupies 20–31 (AEDLQKAKHAPF). Disulfide bonds link Cys37/Cys72, Cys39/Cys65, and Cys55/Cys73.

It belongs to the sea anemone type 3 (BDS) potassium channel toxin family. In terms of tissue distribution, moderately expressed in the ectodermal tissue from the distal and proximal tentacles, body wall, and oral disk.

It localises to the secreted. The protein resides in the nematocyst. Its function is as follows. Blocks Kv3 voltage-gated potassium channels. Reduces blood pressure. The sequence is that of Kappa-actitoxin-Avd4g from Anemonia viridis (Snakelocks anemone).